A 393-amino-acid chain; its full sequence is Yellow-related salivary protein SP03B (393 aa).

A signal peptide spans methionine 1–glycine 18. N-linked (GlcNAc...) asparagine glycosylation occurs at asparagine 29.

This sequence belongs to the major royal jelly protein family. As to expression, female salivary gland (at protein level).

It is found in the secreted. Its function is as follows. Probably modulates blood feeding of sand flies on vertebrate species by binding and sequestering different mediators involved in the host response. Binds biogenic amines. Binds serotonin with high affinity. Poorly binds histamine. Does not bind dopamine, noradrenaline, adrenaline and octopamine. The sequence is that of Yellow-related salivary protein SP03B from Phlebotomus perniciosus (Phlebotomine sand fly).